Reading from the N-terminus, the 318-residue chain is 2-desacetyl-2-hydroxyethyl bacteriochlorophyllide A dehydrogenase (318 aa).

The protein operates within porphyrin-containing compound metabolism; bacteriochlorophyll biosynthesis (light-independent). Its function is as follows. This protein catalyzes the penultimate step in bacteriochlorophyll a biosynthesis. The polypeptide is 2-desacetyl-2-hydroxyethyl bacteriochlorophyllide A dehydrogenase (bchC) (Cereibacter sphaeroides (strain ATCC 17023 / DSM 158 / JCM 6121 / CCUG 31486 / LMG 2827 / NBRC 12203 / NCIMB 8253 / ATH 2.4.1.) (Rhodobacter sphaeroides)).